Consider the following 302-residue polypeptide: uncharacterized protein (302 aa).

Transmembrane regions (helical) follow at residues 25–45, 58–78, 104–124, 158–178, 182–202, 215–235, and 247–267; these read SFIF…LQIF, FSYL…VIAL, IQVG…WMFL, YGLL…ATVL, FAWA…QYVP, ALSI…GYLL, and MMYI…MFYL. The 71-residue stretch at 175-245 folds into the PQ-loop domain; sequence ATVLSSNFAW…SRLPGTNWTT (71 aa).

It localises to the membrane. This is an uncharacterized protein from Schizosaccharomyces pombe (strain 972 / ATCC 24843) (Fission yeast).